The chain runs to 73 residues: Homeodomain-only protein (73 aa).

The segment at residues 3 to 62 (AQTASGPTEDQVEILEYNFNKVNKHPDPTTLCLIAAEAGLTEEQTQKWFKQRLAEWRRSE) is a DNA-binding region (homeobox; degenerate).

In terms of assembly, interacts with serum response factor (SRF). Component of a large complex containing histone deacetylases such as HDAC2. Interacts with the acetylated forms of HSPA1A and HSPA1B. Interacts with HSPA8. In terms of tissue distribution, expressed in the embryonic and adult heart and in the adult brain, liver, lung, skeletal muscle, intestine and spleen. Throughout embryonic and postnatal development, it is expressed in the myocardium.

Its subcellular location is the nucleus. It is found in the cytoplasm. Functionally, atypical homeodomain protein which does not bind DNA and is required to modulate cardiac growth and development. Acts via its interaction with SRF, thereby modulating the expression of SRF-dependent cardiac-specific genes and cardiac development. Prevents SRF-dependent transcription either by inhibiting SRF binding to DNA or by recruiting histone deacetylase (HDAC) proteins that prevent transcription by SRF. Overexpression causes cardiac hypertrophy. Acts as a co-chaperone for HSPA1A and HSPA1B chaperone proteins and assists in chaperone-mediated protein refolding. The protein is Homeodomain-only protein (Hopx) of Mus musculus (Mouse).